A 274-amino-acid chain; its full sequence is Protein RecA (274 aa).

Residue 43-50 coordinates ATP; that stretch reads GPESSGKT.

It belongs to the RecA family.

Its subcellular location is the cytoplasm. Functionally, can catalyze the hydrolysis of ATP in the presence of single-stranded DNA, the ATP-dependent uptake of single-stranded DNA by duplex DNA, and the ATP-dependent hybridization of homologous single-stranded DNAs. It interacts with LexA causing its activation and leading to its autocatalytic cleavage. In Neisseria mucosa, this protein is Protein RecA.